Here is a 162-residue protein sequence, read N- to C-terminus: Protein LTO1 (162 aa).

Residues 17–53 are deca-GX3 motif; required for interaction with YAE1 and the CIA complex; the sequence is GFLEGQNENIKQSFLEGKQYGLQVGFQRFTLLGQMEG.

Belongs to the LTO1 family. Forms a complex with YAE1; the complex bridges the interaction between the CIA complex and RLI1. Associates with the CIA complex (via its C-terminal tryptophan).

Its subcellular location is the nucleus. Essential for life in oxygen, but nonessential under anaerobic conditions. Required for biogenesis of the large ribosomal subunit and initiation of translation in oxygen. The complex LTO1:YAE1 functions as a target specific adapter that recruits apo-RLI1 to the cytosolic iron-sulfur protein assembly (CIA) complex machinery. In Saccharomyces cerevisiae (strain ATCC 204508 / S288c) (Baker's yeast), this protein is Protein LTO1.